We begin with the raw amino-acid sequence, 521 residues long: SET and MYND domain-containing protein DDB_G0292140 (521 aa).

The tract at residues Met1–Lys101 is disordered. A compositionally biased stretch (low complexity) spans Thr12 to Thr55. The span at Thr56–Thr65 shows a compositional bias: pro residues. The span at Pro66–Lys90 shows a compositional bias: low complexity. The segment covering Gly91 to Lys101 has biased composition (basic residues). Residues Trp122 to Ile406 enclose the SET domain. The Zn(2+) site is built by Cys167, Cys170, Cys188, Cys191, Cys197, Cys201, His209, and Cys213. An MYND-type zinc finger spans residues Cys167 to Cys213. The disordered stretch occupies residues Gln442–Asn521. Over residues Lys448–Asp469 the composition is skewed to acidic residues. Residues Asp470–Gly485 show a composition bias toward basic and acidic residues. Residues Ser486 to Asn495 are compositionally biased toward acidic residues. The span at Asn497–His514 shows a compositional bias: low complexity.

This sequence belongs to the class V-like SAM-binding methyltransferase superfamily.

Functionally, probable methyltransferase. In Dictyostelium discoideum (Social amoeba), this protein is SET and MYND domain-containing protein DDB_G0292140.